A 321-amino-acid polypeptide reads, in one-letter code: Lipoyl synthase (321 aa).

Cys-68, Cys-73, Cys-79, Cys-94, Cys-98, Cys-101, and Ser-308 together coordinate [4Fe-4S] cluster. The 218-residue stretch at 80-297 (FNHGTATFMI…KEEAMAMGFT (218 aa)) folds into the Radical SAM core domain.

Belongs to the radical SAM superfamily. Lipoyl synthase family. The cofactor is [4Fe-4S] cluster.

Its subcellular location is the cytoplasm. The catalysed reaction is [[Fe-S] cluster scaffold protein carrying a second [4Fe-4S](2+) cluster] + N(6)-octanoyl-L-lysyl-[protein] + 2 oxidized [2Fe-2S]-[ferredoxin] + 2 S-adenosyl-L-methionine + 4 H(+) = [[Fe-S] cluster scaffold protein] + N(6)-[(R)-dihydrolipoyl]-L-lysyl-[protein] + 4 Fe(3+) + 2 hydrogen sulfide + 2 5'-deoxyadenosine + 2 L-methionine + 2 reduced [2Fe-2S]-[ferredoxin]. The protein operates within protein modification; protein lipoylation via endogenous pathway; protein N(6)-(lipoyl)lysine from octanoyl-[acyl-carrier-protein]: step 2/2. Catalyzes the radical-mediated insertion of two sulfur atoms into the C-6 and C-8 positions of the octanoyl moiety bound to the lipoyl domains of lipoate-dependent enzymes, thereby converting the octanoylated domains into lipoylated derivatives. The sequence is that of Lipoyl synthase from Serratia proteamaculans (strain 568).